The following is a 119-amino-acid chain: Protein TusC (119 aa).

This sequence belongs to the DsrF/TusC family. As to quaternary structure, heterohexamer, formed by a dimer of trimers. The hexameric TusBCD complex contains 2 copies each of TusB, TusC and TusD. The TusBCD complex interacts with TusE.

The protein resides in the cytoplasm. Its function is as follows. Part of a sulfur-relay system required for 2-thiolation of 5-methylaminomethyl-2-thiouridine (mnm(5)s(2)U) at tRNA wobble positions. The chain is Protein TusC from Serratia proteamaculans (strain 568).